A 429-amino-acid polypeptide reads, in one-letter code: Protein ABERRANT PANICLE ORGANIZATION 1 (429 aa).

A compositionally biased stretch (pro residues) spans 1–11 (MMNPRRLPPLP). A disordered region spans residues 1–21 (MMNPRRLPPLPSSTSSASAAD). Residues 25–71 (PRVWRRLPQPLVDRVLACLPTPSFLRLRAACRRFYHLLFSSPFLHSH) enclose the F-box domain. Transmembrane regions (helical) follow at residues 72–92 (LLLS…GHLL) and 112–132 (VAGG…LAFL). Kelch repeat units lie at residues 229 to 277 (MAFA…ELGG), 284 to 339 (RVAL…AEGG), and 350 to 397 (YVVL…GAAG).

In terms of assembly, part of a putative SCF (ASK/Cullin/F-box) ubiquitin ligase complex. Interacts with FL/APO2. As to expression, expressed in seedlings, roots, leaves, shoot apical meristem (SAM), developing panicles, and, at lower levels, in developing seeds.

The protein resides in the membrane. It functions in the pathway protein modification; protein ubiquitination. In terms of biological role, component of SCF(ASK-cullin-F-box) E3 ubiquitin ligase complexes, which may mediate the ubiquitination and subsequent proteasomal degradation of target proteins. Together with FL/APO2, involved in the temporal regulation of meristem identity during both vegetative and reproductive developments in an APO2-dependent manner. Promotes spikelet formation by suppressing the precocious conversion of inflorescence meristems to spikelet meristems, probably via a positive regulation of class-C floral homeotic genes, but not of class-B genes, and through the control of cell proliferation in meristems. Mediates culm development and strength/diameter enhancement at internodes. Required for the regulation of the plastochron, floral organ identity, and floral determinacy. Controls the number of primary rachis branches (PRBs). May trigger the formation of vascular bundle systems which, consequently, promote carbohydrate translocation to panicles. Involved in ozone-induced grain yield regulation. This is Protein ABERRANT PANICLE ORGANIZATION 1 from Oryza sativa subsp. indica (Rice).